Consider the following 894-residue polypeptide: MEIKPVEVIDGVPVFKPSMMEFANFQYFIDEITKFGIENGIVKVIPPKEWLELLEGSPPAESLKTIQLDSPIQQQAKRWDKHENGVFSIENEYDNKSYNLTQWKNLAESLDSRISQGDFNDKTLKENCRVDSQQDCYDLAQLQILESDFWKTIAFSKPFYAVDENSSIFPYDLTLWNLNNLPDSINSSNRRLLTGQSKCIFPWHLDEQNKCSINYLHFGAPKQWYSIPSANTDQFLKILSKEPSSNKENCPAFIRHQNIITSPDFLRKNNIKFNRVVQFQHEFIITFPYCMYSGFNYGYNFGESIEFILDQQAVVRKQPLKCGCGNKKEERKSGPFSNLSYDSNESEQRGSITDNDNDLFQKVRSFDELLNHSSQELQNLEDNKNPLFSNINMNRPQSSSLRSTTPNGVNQFLNMNQTTISRISSPLLSRMMDLSNIVEPTLDDPGSKFKRKVLTPQLPQMNIPSNSSNFGTPSLTNTNSLLSNITATSTNPSTTTNGSQNHNNVNANGINTSAAASINNNISSTNNSANNSSSNNNVSTVPSSMMHSSTLNGTSGLGGDNDDNMLALSLATLANSATASPRLTLPPLSSPMNPNGHTSYNGNMMNNNSGNGSNGSNSYSNGVTTAAATTTSAPHNLSIVSPNPTYSPNPLSLYLTNSKNPLNSGLAPLSPSTSNIPFLKRNNVVTLNISREASKSPISSFVNDYRSPLGVSNPLMYSSTINDYSNGTGIRQNSNNINPLDAGPSFSPLHKKPKILNGNDNSNLDSNNFDYSFTGNKQESNPSILNNNTNNNDNYRTSSMNNNGNNYQAHSSKFGENEVIMSDHGKIYICRECNRQFSSGHHLTRHKKSVHSGEKPHSCPRCGKRFKRRDHVLQHLNKKIPCTQEMENTKLAES.

The JmjN domain occupies 12-53 (VPVFKPSMMEFANFQYFIDEITKFGIENGIVKVIPPKEWLEL). Phosphoserine is present on Ser70. Positions 90 to 110 (ENEYDNKSYNLTQWKNLAESL) form a coiled coil. The 155-residue stretch at 170-324 (PYDLTLWNLN…VRKQPLKCGC (155 aa)) folds into the JmjC domain. The short motif at 316–332 (RKQPLKCGCGNKKEERK) is the Bipartite nuclear localization signal element. A disordered region spans residues 324–355 (CGNKKEERKSGPFSNLSYDSNESEQRGSITDN). Polar residues predominate over residues 335 to 354 (PFSNLSYDSNESEQRGSITD). Ser343 carries the phosphoserine modification. A coiled-coil region spans residues 361 to 385 (QKVRSFDELLNHSSQELQNLEDNKN). Low complexity predominate over residues 521–554 (NISSTNNSANNSSSNNNVSTVPSSMMHSSTLNGT). The segment at 521-558 (NISSTNNSANNSSSNNNVSTVPSSMMHSSTLNGTSGLG) is disordered. Phosphoserine is present on residues Ser690, Ser694, Ser696, Ser734, and Ser747. Residues 756–768 (LNGNDNSNLDSNN) are compositionally biased toward low complexity. Positions 756–810 (LNGNDNSNLDSNNFDYSFTGNKQESNPSILNNNTNNNDNYRTSSMNNNGNNYQAH) are disordered. Composition is skewed to polar residues over residues 769–785 (FDYSFTGNKQESNPSIL) and 795–810 (YRTSSMNNNGNNYQAH). A C2H2-type 1 zinc finger spans residues 828-851 (YICRECNRQFSSGHHLTRHKKSVH). The C2H2-type 2; atypical zinc-finger motif lies at 857-882 (HSCPRCGKRFKRRDHVLQHLNKKIPC).

The protein resides in the nucleus. Functionally, transcription factor involved in the regulation of gene expression upon nutrient starvation. Recognizes and binds to the post-diauxic-shift element 5'-T[AT]AGGGAT-3' in the promoter region. Can act as a transcriptional activator (e.g. of stress genes like SSA3, HSP12 and HSP26) as well as a repressor (e.g. of pyrophosphate phosphatase DPP1). GIS1 also acts as a DNA damage-responsive transcriptional repressor of photolyase PHR1. This Saccharomyces cerevisiae (strain ATCC 204508 / S288c) (Baker's yeast) protein is Transcriptional activator/repressor GIS1 (GIS1).